The primary structure comprises 264 residues: Thiazole synthase (264 aa).

Catalysis depends on K106, which acts as the Schiff-base intermediate with DXP. 1-deoxy-D-xylulose 5-phosphate-binding positions include G167, 193–194, and 215–216; these read AG and NS.

It belongs to the ThiG family. Homotetramer. Forms heterodimers with either ThiH or ThiS.

It localises to the cytoplasm. It catalyses the reaction [ThiS sulfur-carrier protein]-C-terminal-Gly-aminoethanethioate + 2-iminoacetate + 1-deoxy-D-xylulose 5-phosphate = [ThiS sulfur-carrier protein]-C-terminal Gly-Gly + 2-[(2R,5Z)-2-carboxy-4-methylthiazol-5(2H)-ylidene]ethyl phosphate + 2 H2O + H(+). Its pathway is cofactor biosynthesis; thiamine diphosphate biosynthesis. Functionally, catalyzes the rearrangement of 1-deoxy-D-xylulose 5-phosphate (DXP) to produce the thiazole phosphate moiety of thiamine. Sulfur is provided by the thiocarboxylate moiety of the carrier protein ThiS. In vitro, sulfur can be provided by H(2)S. The polypeptide is Thiazole synthase (Pseudomonas fluorescens (strain Pf0-1)).